Reading from the N-terminus, the 541-residue chain is Glucose-6-phosphate isomerase (541 aa).

Glu346 acts as the Proton donor in catalysis. Catalysis depends on residues His377 and Lys506.

The protein belongs to the GPI family.

The protein resides in the cytoplasm. It catalyses the reaction alpha-D-glucose 6-phosphate = beta-D-fructose 6-phosphate. It participates in carbohydrate biosynthesis; gluconeogenesis. Its pathway is carbohydrate degradation; glycolysis; D-glyceraldehyde 3-phosphate and glycerone phosphate from D-glucose: step 2/4. Catalyzes the reversible isomerization of glucose-6-phosphate to fructose-6-phosphate. In Rhizobium etli (strain ATCC 51251 / DSM 11541 / JCM 21823 / NBRC 15573 / CFN 42), this protein is Glucose-6-phosphate isomerase.